The chain runs to 384 residues: MSHATGSRAAGATTACKVIVGMSGGVDSSVTALTLLEQGYAVEGLFMKNWDEDDGTEYCTAKEDLADAQAVCDTLGITLHTANFAAEYWDNVFEHFLAEYKAGRTPNPDILCNREIKFKVFLEYAEMLGAEKIATGHYVRQGWRDGHCRLLKGLDANKDQSYFLHAVPEVAIARTLFPVGEMEKSEVRAIAERHGLTTARKKDSTGICFIGERRFSDFLKQYLPAQPGVIETPEGEVIGEHMGLMYYTLGQRQGLGIGGLPNHPDAPWYVAAKDLERNVLIAVQGKHHPLLYTDSLSTEPVEWVAGQPPAPEARLQAKTRYRQQDVACHVRVLEDGGVEARFDEPQRAVTPGQSLVLYDGDICLGGGVIRSTWNHSEPRGDSAA.

ATP-binding positions include 21–28 (GMSGGVDS) and Met47. The interaction with target base in tRNA stretch occupies residues 107 to 109 (NPD). Cys112 acts as the Nucleophile in catalysis. Cys112 and Cys208 form a disulfide bridge. Gly136 contributes to the ATP binding site. The interval 158 to 160 (KDQ) is interaction with tRNA. Cys208 acts as the Cysteine persulfide intermediate in catalysis. The tract at residues 320 to 321 (RY) is interaction with tRNA.

The protein belongs to the MnmA/TRMU family.

It localises to the cytoplasm. The catalysed reaction is S-sulfanyl-L-cysteinyl-[protein] + uridine(34) in tRNA + AH2 + ATP = 2-thiouridine(34) in tRNA + L-cysteinyl-[protein] + A + AMP + diphosphate + H(+). Functionally, catalyzes the 2-thiolation of uridine at the wobble position (U34) of tRNA, leading to the formation of s(2)U34. The polypeptide is tRNA-specific 2-thiouridylase MnmA (Chromohalobacter salexigens (strain ATCC BAA-138 / DSM 3043 / CIP 106854 / NCIMB 13768 / 1H11)).